The primary structure comprises 509 residues: MVQISNVWGFGLAIMASLAAAAPKDCPDGLCLRTRANLSPLEVSQELGPLISNASSIFGPSDSRWANATARYQQYAAPKFTVVVRVARESDVSVIIKYANRNSLPFYAVNRGHGLPISQAKFSGLEIDMQLLTGITIQSNGKSALFQGGTYDQQVMDTLWEEGYVTTTGSCGCVGMLGPALGGGHGRQQGFHGLISDNILKLNVVLADGTTATVSNTSHTDLFWAMKGAGHNFGVVTSFEMSIYPTQVHSWYYKNYVFTQDKLEDLFEQLNVLQGNGTQPVKMAAQYGIYMMDSTVSATEAIIWWTFGYAGSQSEAQQYLTPFDDLNPLSSTDGNVPFPEVPNVQGTGINNATCDKGLERIVGPAGLQVYNATAQRQIYDLFNRNVKSYPELAASAVVMEGYSVEAVRKVDSDSSAYPMRDDYLLMQTTVSYSPNSTLDNVAIDWVTENQKFWNEGQPTRKPTAYVNYASGRESLEAMYGYEPWRLERLRKLKAKYDPEGRFSYYNPIV.

Positions 1-21 are cleaved as a signal peptide; it reads MVQISNVWGFGLAIMASLAAA. Residues 75-246 form the FAD-binding PCMH-type domain; it reads YAAPKFTVVV…TSFEMSIYPT (172 aa).

This sequence belongs to the oxygen-dependent FAD-linked oxidoreductase family. Requires FAD as cofactor.

It catalyses the reaction (2S,9S)-annullatin H + 2 A = (2S,9S)-annullatin D + 2 AH2. It functions in the pathway secondary metabolite biosynthesis. Functionally, cytochrome P450 monooxygenase; part of the gene cluster that mediates the biosynthesis of annullatin D, an alkylated aromatic polyketide with a fused dihydrobenzofuran lactone ring system that exhibits potent agonistic activities toward the cannabinoid receptors. Within the pathway, anuG is responsible for the five-member lactone ring formation in (2S, 9S)-annullatin D via oxidative lactonization between the two hydroxyl groups. The annullatin backbone 2-hydroxymethyl-3-pentylphenol is assembled from one acetyl-CoA starter unit and 5 malonyl-CoA elongation units by cooperation of the highly reducing polyketide synthase anuA, the short-chain dehydrogenase anuB and the oxidoreductase anuC, before being hydroxylated at the C-5 alkyl chain by the cytochrome P450 monooxygenase anuE to form (8S)-annullatin E. The prenyltransferase anuH subsequently installs one isoprenyl group at the benzene ring to form (8S)-annullatin J. Enzymatic or nonenzymatic dihydro-benzofuran ring formation between the prenyl and the phenolic hydroxyl groups in (8S)-annullatin J results in two diastereomers (2S,9S)-annullatin H and compound 12. The intermediate (2S,9S)-annullatin H is then converted to (2S,9S)-annullatin D by the FAD-linked oxidoreductase anuG-catalyzed five-member lactone ring formation. The isomer 12 acts as a substrate for the short-chain dehydrogenase anuF and is oxidized to (2R)-annullatin F, which is subsequently acetylated by an acetyltransferase leading to (2R)-annullatin G formation. The remaining enzymes identified within the cluster, anuD, anuI and anuJ, seem not to be involved in annullatin biosynthesis. The chain is FAD-linked oxidoreductase anuG from Penicillium roqueforti (strain FM164).